The chain runs to 119 residues: UPF0231 protein ECA3777 (119 aa).

This sequence belongs to the UPF0231 family.

In Pectobacterium atrosepticum (strain SCRI 1043 / ATCC BAA-672) (Erwinia carotovora subsp. atroseptica), this protein is UPF0231 protein ECA3777.